We begin with the raw amino-acid sequence, 100 residues long: DNA base-flipping protein (100 aa).

This sequence belongs to the MGMT family. ATL subfamily.

Its function is as follows. Involved in DNA damage recognition. Binds DNA containing O(6)-methylguanine. Binds to the damaged base and flips the base out of the DNA duplex into an extrahelical conformation, which allows processing by repair proteins. This Vibrio parahaemolyticus serotype O3:K6 (strain AQ3810) protein is DNA base-flipping protein.